The following is a 528-amino-acid chain: DNA primase large subunit (528 aa).

The segment at 210–239 is H-T-H-like motif; sequence NEEHQRKQYFQQEKFIKLPFENVIELVGNR. Residues cysteine 336, cysteine 417, cysteine 434, and cysteine 474 each coordinate [4Fe-4S] cluster.

It belongs to the eukaryotic-type primase large subunit family. In terms of assembly, DNA polymerase alpha:primase is a four subunit enzyme complex, which is assembled throughout the cell cycle, and consists of the two DNA polymerase subunits A POL1 and B POL12, and the DNA primase large PRI2 and small PRI1 subunits. Interacts with MCM10. It depends on [4Fe-4S] cluster as a cofactor.

Its function is as follows. DNA primase is the polymerase that synthesizes small RNA primers for the Okazaki fragments made during discontinuous DNA replication. In a complex with DNA polymerase alpha (DNA polymerase alpha:primase) constitutes a replicative polymerase. Both primase components participate in formation of the active center, but the ATP-binding site is exclusively located on p48. This Saccharomyces cerevisiae (strain ATCC 204508 / S288c) (Baker's yeast) protein is DNA primase large subunit (PRI2).